Here is a 281-residue protein sequence, read N- to C-terminus: uncharacterized protein (281 aa).

This is an uncharacterized protein from Bacillus subtilis (strain 168).